Consider the following 473-residue polypeptide: MQPFVLYNSEQRKKVEFVPRKEGHIDMYVCGMTVYDYCHIGHARVMVAFDYIIRFLRSQGWKVRYIRNITDIDDKIIKRANENGETIQQLTTRFIDAMNEDAANLGCLAPDEAPKATEYIDQMQNMIGNLVNKGAAYPASNGDVYFEVTKFEKYGRLSGRKLEDMQAGASERVDVEVEKKHPFDFVLWKHAKENEPSWASPWGNGRPGWHIECSAMSTCCLGNHFDIHGGGSDLMFPHHENEIAQSEASTGEQYVNYWMHVGFINVDGEKMSKSLGNFFTIRDVMEKFHPEVIRYFIVSSHYRSPVNFSDVALKEAKTSLTRFYHSFKAYQQVYGQTTTEALDQSFIERFNNAMCDDFNTAEAMAVLFELNKELNRAVKEEQADQATVLYSTLRHLTNILGLVQHNVDDFLKSDIGQDALALSDAEIEDFIQQRVDAKKAKDFAKADSIRQSLLEQGVVLEDTRQGTVWRRAD.

Cys-30 lines the Zn(2+) pocket. A 'HIGH' region motif is present at residues 32 to 42 (MTVYDYCHIGH). Zn(2+) contacts are provided by Cys-213, His-238, and Glu-242. The 'KMSKS' region motif lies at 270–274 (KMSKS). ATP is bound at residue Lys-273.

This sequence belongs to the class-I aminoacyl-tRNA synthetase family. As to quaternary structure, monomer. Requires Zn(2+) as cofactor.

The protein localises to the cytoplasm. It carries out the reaction tRNA(Cys) + L-cysteine + ATP = L-cysteinyl-tRNA(Cys) + AMP + diphosphate. This is Cysteine--tRNA ligase from Acinetobacter baumannii (strain ACICU).